A 395-amino-acid chain; its full sequence is Elongation factor Tu (395 aa).

Residues 10-204 (LPHVNIGTIG…AVDEYIPTPQ (195 aa)) enclose the tr-type G domain. Positions 19-26 (GHVDHGKT) are G1. 19 to 26 (GHVDHGKT) is a GTP binding site. A Mg(2+)-binding site is contributed by threonine 26. The G2 stretch occupies residues 60–64 (GITIN). The G3 stretch occupies residues 81 to 84 (DCPG). Residues 81-85 (DCPGH) and 136-139 (NKCD) contribute to the GTP site. Positions 136-139 (NKCD) are G4. The interval 174–176 (SAL) is G5.

It belongs to the TRAFAC class translation factor GTPase superfamily. Classic translation factor GTPase family. EF-Tu/EF-1A subfamily. As to quaternary structure, monomer.

The protein localises to the cytoplasm. It catalyses the reaction GTP + H2O = GDP + phosphate + H(+). Its function is as follows. GTP hydrolase that promotes the GTP-dependent binding of aminoacyl-tRNA to the A-site of ribosomes during protein biosynthesis. The polypeptide is Elongation factor Tu (Mycoplasma capricolum subsp. capricolum (strain California kid / ATCC 27343 / NCTC 10154)).